A 356-amino-acid chain; its full sequence is Histidinol-phosphate aminotransferase 1 (356 aa).

Lysine 213 is subject to N6-(pyridoxal phosphate)lysine.

This sequence belongs to the class-II pyridoxal-phosphate-dependent aminotransferase family. Histidinol-phosphate aminotransferase subfamily. In terms of assembly, homodimer. Requires pyridoxal 5'-phosphate as cofactor.

It carries out the reaction L-histidinol phosphate + 2-oxoglutarate = 3-(imidazol-4-yl)-2-oxopropyl phosphate + L-glutamate. It functions in the pathway amino-acid biosynthesis; L-histidine biosynthesis; L-histidine from 5-phospho-alpha-D-ribose 1-diphosphate: step 7/9. The chain is Histidinol-phosphate aminotransferase 1 from Burkholderia pseudomallei (strain K96243).